Reading from the N-terminus, the 239-residue chain is MKKFNTEEKIILAIDGLDIFQAKVLLERCPNIKWVKVGLELFTREGPSVIKILKNLNKKIFLDLKFHDIPNTMSAACYEVSKLGVDIISVHASAGSKALTASKKASLEGAKIATVNAPCVIGITVLTSLSSEEFQTDLDRKNSIEENVIRLAKLSFDAGLDGCVCSPLEAKILRSMYKNNFELITPGIRTNIQKKDDQNRIMTPFEAISNGSSKLVIGRAITKAKDPNKAFLDICESIC.

Substrate contacts are provided by residues aspartate 15, lysine 36, 63–72, threonine 127, arginine 189, glutamine 198, glycine 218, and arginine 219; that span reads DLKFHDIPNT. Lysine 65 functions as the Proton donor in the catalytic mechanism.

It belongs to the OMP decarboxylase family. Type 1 subfamily. As to quaternary structure, homodimer.

It carries out the reaction orotidine 5'-phosphate + H(+) = UMP + CO2. The protein operates within pyrimidine metabolism; UMP biosynthesis via de novo pathway; UMP from orotate: step 2/2. Catalyzes the decarboxylation of orotidine 5'-monophosphate (OMP) to uridine 5'-monophosphate (UMP). The chain is Orotidine 5'-phosphate decarboxylase from Prochlorococcus marinus subsp. pastoris (strain CCMP1986 / NIES-2087 / MED4).